A 345-amino-acid polypeptide reads, in one-letter code: Arginine N-succinyltransferase (345 aa).

Leu125 is a binding site for succinyl-CoA. Residue His229 is the Proton donor of the active site.

Belongs to the arginine N-succinyltransferase family.

The enzyme catalyses succinyl-CoA + L-arginine = N(2)-succinyl-L-arginine + CoA + H(+). It functions in the pathway amino-acid degradation; L-arginine degradation via AST pathway; L-glutamate and succinate from L-arginine: step 1/5. Catalyzes the transfer of succinyl-CoA to arginine to produce N(2)-succinylarginine. The chain is Arginine N-succinyltransferase from Yersinia enterocolitica serotype O:8 / biotype 1B (strain NCTC 13174 / 8081).